Reading from the N-terminus, the 83-residue chain is Bublin coiled-coil protein (83 aa).

Residues 1–25 (MSGPNGDLGMPVDAGTEGENDSFGE) form a disordered region. Residues 25–74 (EAEYAAINSMLDQINSCLDHLEEKNDHLHARLQELLESNRQTRLEFQQQL) are a coiled coil. Serine 82 is modified (phosphoserine).

The protein belongs to the UPF0184 (EST00098) family.

Its subcellular location is the cell junction. It is found in the cytoplasm. The protein resides in the cytoskeleton. In terms of biological role, essential for intermediate filament organization in intestinal cells, interacts with intermediate filament and regulates intestinal lumen morphology. This chain is Bublin coiled-coil protein, found in Mus musculus (Mouse).